The sequence spans 806 residues: Leucine--tRNA ligase (806 aa).

The 'HIGH' region motif lies at 40–51 (PYPSGKGLHVGH). The 'KMSKS' region signature appears at 580–584 (KMSKS). Residue K583 coordinates ATP.

The protein belongs to the class-I aminoacyl-tRNA synthetase family.

Its subcellular location is the cytoplasm. The catalysed reaction is tRNA(Leu) + L-leucine + ATP = L-leucyl-tRNA(Leu) + AMP + diphosphate. This is Leucine--tRNA ligase from Ureaplasma urealyticum serovar 10 (strain ATCC 33699 / Western).